A 984-amino-acid chain; its full sequence is Shutoff protein (984 aa).

Residues 131-231 (GVAAESDPSD…DLERDALVAP (101 aa)) form a disordered region. The segment covering 137-147 (DPSDDEPDPEP) has biased composition (acidic residues). A compositionally biased stretch (basic and acidic residues) spans 148–159 (EYDHREADHDSD). Residues 176–186 (VDEEPQDDSPS) are compositionally biased toward acidic residues. Polar residues predominate over residues 190-202 (TASTVIEEAQTSA). The span at 205–216 (DSHDDDTHRDDG) shows a compositional bias: basic and acidic residues. A binding to host EIF4G region spans residues 411-476 (LMETLLQPFA…AVRYTATLEL (66 aa)). The RRM domain maps to 479–597 (RVFREPSMVK…RLYSLPNPTA (119 aa)). 2 disordered regions span residues 810–853 (GVYK…GNRA) and 876–984 (KVGP…RQEE). Tyrosine 812 carries the phosphotyrosine; by host modification. The segment covering 913 to 923 (AGGRRFGRRNT) has biased composition (basic residues). Over residues 945–958 (RGQQGEHPTTSPSA) the composition is skewed to low complexity.

The protein belongs to the adenoviridae shutoff protein family. Monomer. Interacts with hexon protein; this interaction allows chaperoning and trimerization of hexon proteins. Interacts (via N-terminus) with host initiation factor EIF4G (via C-terminus). Interacts (via RRM domain) with viral mRNAs that contain the tripartite leader; this interaction allows ribosome shunting and expression of viral late mRNAs. Post-translationally, might be cleaved by the viral protease. In terms of processing, phosphorylated. Tyrosine phosphorylation enhances preferential binding to tripartite leader mRNAs and allows ribosome shunting. Methylated. Asymmetric dimethylation by host PRMT1 of the Arg/Gly-rich region may regulate shutoff protein binding to hexon and promote the capsid assembly in the nucleus.

The protein localises to the host cytoplasm. Protein that inhibits host translation while promoting late viral translation by ribosome shunting. Blocks host cap-dependent translation by binding to eIF4G, displacing MKNK1 from cap initiation complexes and preventing EIF4E phosphorylation. Binds to the tripartite leader sequence of viral late mRNAs and recruits host eIF4G, PABPC1/poly-A binding protein and 40S ribosomes subunits on viral mRNAs, allowing ribosome shunting and efficient translation of late viral mRNAs even though conventional translation via ribosome scanning from the cap has been shut off in the host cell. During assembly, acts as a chaperone protein that helps hexon proteins assembly into trimers. This is Shutoff protein from Galliformes (FAdV-1).